We begin with the raw amino-acid sequence, 471 residues long: 1,3-beta-glucanosyltransferase GAS4 (471 aa).

The signal sequence occupies residues methionine 1–alanine 21. A disulfide bridge connects residues cysteine 70 and cysteine 99. (1,3-beta-D-glucosyl)n is bound at residue tyrosine 88. N-linked (GlcNAc...) asparagine glycosylation is present at asparagine 151. (1,3-beta-D-glucosyl)n contacts are provided by asparagine 160, glutamate 161, aspartate 203, and arginine 208. Glutamate 161 (proton donor) is an active-site residue. Cystine bridges form between cysteine 217–cysteine 354 and cysteine 238–cysteine 269. The active-site Nucleophile is glutamate 266. (1,3-beta-D-glucosyl)n is bound at residue tyrosine 298. A glycan (N-linked (GlcNAc...) asparagine) is linked at asparagine 398. Residue asparagine 447 is the site of GPI-anchor amidated asparagine attachment. Positions serine 448 to phenylalanine 471 are cleaved as a propeptide — removed in mature form.

This sequence belongs to the glycosyl hydrolase 72 family.

The protein localises to the cell membrane. Splits internally a 1,3-beta-glucan molecule and transfers the newly generated reducing end (the donor) to the non-reducing end of another 1,3-beta-glucan molecule (the acceptor) forming a 1,3-beta linkage, resulting in the elongation of 1,3-beta-glucan chains in the cell wall. Involved in spore wall assembly. This is 1,3-beta-glucanosyltransferase GAS4 (GAS4) from Saccharomyces cerevisiae (strain ATCC 204508 / S288c) (Baker's yeast).